The sequence spans 490 residues: Betaine aldehyde dehydrogenase (490 aa).

Thr-26, Ile-27, and Asp-93 together coordinate K(+). Residue 150-152 (GAW) coordinates NAD(+). Lys-162 acts as the Charge relay system in catalysis. NAD(+) is bound at residue 176-179 (KPSE). Val-180 is a binding site for K(+). 230-233 (GVAS) contacts NAD(+). Leu-246 serves as a coordination point for K(+). Catalysis depends on Glu-252, which acts as the Proton acceptor. NAD(+) contacts are provided by Gly-254, Cys-286, and Glu-387. Cys-286 functions as the Nucleophile in the catalytic mechanism. Position 286 is a cysteine sulfenic acid (-SOH) (Cys-286). 2 residues coordinate K(+): Lys-457 and Gly-460. Glu-464 serves as the catalytic Charge relay system.

The protein belongs to the aldehyde dehydrogenase family. As to quaternary structure, dimer of dimers. It depends on K(+) as a cofactor.

It carries out the reaction betaine aldehyde + NAD(+) + H2O = glycine betaine + NADH + 2 H(+). Its pathway is amine and polyamine biosynthesis; betaine biosynthesis via choline pathway; betaine from betaine aldehyde: step 1/1. Functionally, involved in the biosynthesis of the osmoprotectant glycine betaine. Catalyzes the irreversible oxidation of betaine aldehyde to the corresponding acid. The protein is Betaine aldehyde dehydrogenase of Escherichia coli O8 (strain IAI1).